We begin with the raw amino-acid sequence, 837 residues long: Vacuolar membrane protease (837 aa).

Topologically, residues 1 to 36 (MSEEEVHDTSSEASEVFTNQPNAFVRGVRSIFGYRK) are cytoplasmic. Residues 37 to 57 (TSLTLFVILTIVVTAGLSFYD) traverse the membrane as a helical segment. The Vacuolar portion of the chain corresponds to 58-355 (NSLELTIELP…FATPISALAR (298 aa)). A glycan (N-linked (GlcNAc...) asparagine) is linked at asparagine 143. Positions 157 and 169 each coordinate Zn(2+). The active-site Proton acceptor is the glutamate 201. Glutamate 202, glutamate 227, and histidine 299 together coordinate Zn(2+). A helical membrane pass occupies residues 356 to 376 (VNLVLLVLFPVVSTPLLFVIV). Topologically, residues 377-384 (KYKKWKLR) are cytoplasmic. A helical transmembrane segment spans residues 385-405 (VTNFLGVPLAMGLAVAVGQVG). The Vacuolar segment spans residues 406–415 (NPMLVSSHPM). Residues 416–436 (MVVATTTSIVVLVYYVVLNGV) form a helical membrane-spanning segment. At 437–446 (DWVNTSSDQK) the chain is on the cytoplasmic side. A helical membrane pass occupies residues 447-467 (LVTMIEVSFVYWVVLVYVTWS). The Vacuolar segment spans residues 468 to 474 (GGDHTGE). The chain crosses the membrane as a helical span at residues 475–495 (FGVTVLFFVQASTSLLGLIGW). Topologically, residues 496–539 (TFTRVRGGDEPLLSGEEERYGTEDERDTEKPLVEHNYDWSLQYL) are cytoplasmic. A helical transmembrane segment spans residues 540 to 560 (LIVPVSSLVVYNSGWLVLEGV). An N-linked (GlcNAc...) asparagine glycan is attached at asparagine 561. Residues 561–572 (NKTVQESLASEH) lie on the Vacuolar side of the membrane. A helical transmembrane segment spans residues 573-593 (LIYWIVVVFSQFLVLPVVPFI). At 594-598 (TKFNR) the chain is on the cytoplasmic side. Residues 599–619 (YIVLGLSVVAVVGVLMSMAVH) traverse the membrane as a helical segment. The Vacuolar portion of the chain corresponds to 620 to 837 (PFNQGSPMKL…LVGVVKHVDV (218 aa)). Asparagine 689 carries N-linked (GlcNAc...) asparagine glycosylation.

Belongs to the peptidase M28 family. It depends on Zn(2+) as a cofactor.

It is found in the vacuole membrane. Its function is as follows. May be involved in vacuolar sorting and osmoregulation. This Candida albicans (strain WO-1) (Yeast) protein is Vacuolar membrane protease.